The following is a 121-amino-acid chain: UPF0102 protein Hhal_2103 (121 aa).

The disordered stretch occupies residues 1 to 20 (MMAPQTTRNDPRQRGQEAEE). Residues 9–20 (NDPRQRGQEAEE) are compositionally biased toward basic and acidic residues.

This sequence belongs to the UPF0102 family.

This chain is UPF0102 protein Hhal_2103, found in Halorhodospira halophila (strain DSM 244 / SL1) (Ectothiorhodospira halophila (strain DSM 244 / SL1)).